We begin with the raw amino-acid sequence, 554 residues long: Glutamine--tRNA ligase (554 aa).

Residues 34-44 (PEPNGYLHIGH) carry the 'HIGH' region motif. Residues 35 to 37 (EPN) and 41 to 47 (HIGHAKS) contribute to the ATP site. Positions 67 and 212 each coordinate L-glutamine. ATP is bound by residues threonine 231, 261-262 (RL), and 269-271 (MSK). The 'KMSKS' region signature appears at 268 to 272 (VMSKR).

It belongs to the class-I aminoacyl-tRNA synthetase family. Monomer.

The protein resides in the cytoplasm. It catalyses the reaction tRNA(Gln) + L-glutamine + ATP = L-glutaminyl-tRNA(Gln) + AMP + diphosphate. The protein is Glutamine--tRNA ligase of Shigella boydii serotype 4 (strain Sb227).